Reading from the N-terminus, the 395-residue chain is Carbohydrate sulfotransferase 6 (395 aa).

Residues 1–5 lie on the Cytoplasmic side of the membrane; sequence MWLPR. A helical; Signal-anchor for type II membrane protein transmembrane segment spans residues 6 to 26; the sequence is VSSTAVTALLLAQTFLLLFLV. The Lumenal segment spans residues 27–395; that stretch reads SRPGPSSPAG…ASSTASHPRN (369 aa). Residue 49–55 participates in 3'-phosphoadenylyl sulfate binding; that stretch reads WRSGSSF. Asn116 carries N-linked (GlcNAc...) asparagine glycosylation. Position 202–210 (202–210) interacts with 3'-phosphoadenylyl sulfate; that stretch reads RDPRAVLRS. 3 N-linked (GlcNAc...) asparagine glycosylation sites follow: Asn229, Asn305, and Asn328.

It belongs to the sulfotransferase 1 family. Gal/GlcNAc/GalNAc subfamily. As to expression, expressed in cornea. Mainly expressed in brain. Also expressed in spinal cord and trachea.

The protein resides in the golgi apparatus membrane. The enzyme catalyses 3'-phosphoadenylyl sulfate + keratan = adenosine 3',5'-bisphosphate + keratan 6'-sulfate.. In terms of biological role, sulfotransferase that utilizes 3'-phospho-5'-adenylyl sulfate (PAPS) as sulfonate donor to catalyze the transfer of sulfate to position 6 of non-reducing N-acetylglucosamine (GlcNAc) residues of keratan. Cooperates with B4GALT4 galactosyltransferase and B3GNT7 N-acetylglucosaminyltransferase to construct and elongate the sulfated disaccharide unit [-&gt;3Galbeta1-&gt;4(6-sulfoGlcNAcbeta)1-&gt;] within keratan sulfate polymer. Involved in biosynthesis of keratan sulfate in cornea, with an impact on proteoglycan fibril organization and corneal transparency. Involved in sulfation of endothelial mucins such as GLYCAM1. This is Carbohydrate sulfotransferase 6 from Homo sapiens (Human).